Here is a 138-residue protein sequence, read N- to C-terminus: Cell division protein SepF (138 aa).

A disordered region spans residues 1–59 (MNNKFKDFFGFGDNDSYEERDAYEEHYDEQEEMQNSNRPTNSRDSNVVSIKAGQAGSGP). Over residues 33 to 48 (MQNSNRPTNSRDSNVV) the composition is skewed to polar residues.

The protein belongs to the SepF family. As to quaternary structure, homodimer. Interacts with FtsZ.

The protein localises to the cytoplasm. In terms of biological role, cell division protein that is part of the divisome complex and is recruited early to the Z-ring. Probably stimulates Z-ring formation, perhaps through the cross-linking of FtsZ protofilaments. Its function overlaps with FtsA. The sequence is that of Cell division protein SepF from Lactobacillus delbrueckii subsp. bulgaricus (strain ATCC 11842 / DSM 20081 / BCRC 10696 / JCM 1002 / NBRC 13953 / NCIMB 11778 / NCTC 12712 / WDCM 00102 / Lb 14).